The sequence spans 337 residues: MNRFILLALVAAVVAVNSAKLSRQIESAIEKWDDYKEDFDKEYSESEEQTYMEAFVKNMIHIENHNRDHRLGRKTFEMGLNHIADLPFSQYRKLNGYRRLFGDSRIKNSSSFLAPFNVQVPDEVDWRDTHLVTDVKNQGMCGSCWAFSATGALEGQHARKLGQLVSLSEQNLVDCSTKYGNHGCNGGLMDQAFEYIRDNHGVDTEESYPYKGRDMKCHFNKKTVGADDKGYVDTPEGDEEQLKIAVATQGPISIAIDAGHRSFQLYKKGVYYDEECSSEELDHGVLLVGYGTDPEHGDYWIVKNSWGAGWGEKGYIRIARNRNNHCGVATKASYPLV.

Positions 1–18 (MNRFILLALVAAVVAVNS) are cleaved as a signal peptide. The propeptide at 19 to 119 (AKLSRQIESA…SSFLAPFNVQ (101 aa)) is activation peptide. N-linked (GlcNAc...) asparagine glycosylation occurs at N108. Intrachain disulfides connect C141–C184, C175–C217, and C276–C326. C144 is a catalytic residue. Active-site residues include H283 and N304.

This sequence belongs to the peptidase C1 family. Expressed in intestine, pharynx posterior bulb, hypodermis and cuticle (at protein level). Expressed in germ cells, developing oocytes, sheath cells surrounding germ cells and oocytes, and in the eggshell (at protein level).

It localises to the secreted. Its subcellular location is the cytoplasmic granule. It is found in the lysosome. The protein localises to the endosome. The protein resides in the cytoplasmic vesicle. It localises to the phagosome. The enzyme catalyses Specificity close to that of papain. As compared to cathepsin B, cathepsin L exhibits higher activity toward protein substrates, but has little activity on Z-Arg-Arg-NHMec, and no peptidyl-dipeptidase activity.. Functionally, cysteine protease which plays an essential role in the degradation of proteins in lysosomes. During early embryogenesis, maternally required for the proteolytic processing of yolk proteins in platelets, a lysosome-like structure where a slow and controlled degradation of yolk proteins occurs. In the gonad, required for the clearance of apoptotic germ cells in the engulfing cell phagolysosomes. In embryos, required for the degradation of endocytic and autophagic cargos. In embryos, may play a role in the degradation of lipid-containing droplets. Required for larval development. The polypeptide is Cathepsin L-like (Caenorhabditis elegans).